Here is a 963-residue protein sequence, read N- to C-terminus: Protocadherin alpha-C1 (963 aa).

Residues 1 to 18 form the signal peptide; that stretch reads MVGWGVAVLCLWVSCGAA. 5 Cadherin domains span residues 19–124, 125–233, 234–340, 349–445, and 446–555; these read AGQL…SPLF, PAGD…APVF, ERSV…APEL, VPED…TPSF, and PQPQ…YPVI. Residues 19–683 are Extracellular-facing; it reads AGQLEYSVPE…GGQLSAQNLY (665 aa). Asn-38 is a glycosylation site (N-linked (GlcNAc...) asparagine). N-linked (GlcNAc...) asparagine glycans are attached at residues Asn-248 and Asn-274. N-linked (GlcNAc...) asparagine glycosylation occurs at Asn-562. In terms of domain architecture, Cadherin 6 spans 570–667; the sequence is VPRSARTGHL…NSVPQLLPDF (98 aa). Residues 684–704 traverse the membrane as a helical segment; the sequence is LVIALACISFLFLGCLLFFVC. Over 705–963 the chain is Cytoplasmic; the sequence is TKLHQSPGCC…GNSTTDNSDQ (259 aa). 4 PXXP repeats span residues 812 to 815, 845 to 848, 886 to 889, and 904 to 907; these read PRQP, PGGP, PGNP, and PGSP. The tract at residues 812 to 907 is 4 X 4 AA repeats of P-X-X-P; sequence PRQPNPDWRY…PDKFIIPGSP (96 aa). Residues 844–902 form a disordered region; that stretch reads GPGGPDQQWPTVSSATPEPEAGEVSPPVGAGVNSNSWTFKYGPGNPKQSGPGELPDKFI. Positions 914-963 are disordered; that stretch reads QEPANSQIDKSDFITFGKKEETKKKKKKKKGNKTQEKKEKGNSTTDNSDQ. Over residues 922 to 936 the composition is skewed to basic and acidic residues; that stretch reads DKSDFITFGKKEETK.

Its subcellular location is the cell membrane. Potential calcium-dependent cell-adhesion protein. May be involved in the establishment and maintenance of specific neuronal connections in the brain. The sequence is that of Protocadherin alpha-C1 (PCDHAC1) from Pan troglodytes (Chimpanzee).